Here is a 147-residue protein sequence, read N- to C-terminus: Hemoglobin subunit gamma-1 (147 aa).

Residue Gly2 is modified to N-acetylglycine. Positions 3 to 147 constitute a Globin domain; sequence HFTEEDKATI…VASALSSRYH (145 aa). A Phosphothreonine modification is found at Thr13. 3 positions are modified to phosphoserine: Ser45, Ser51, and Ser53. N6-acetyllysine is present on Lys60. Residue His64 participates in heme b binding. Residue Lys83 is modified to N6-acetyllysine. His93 provides a ligand contact to heme b. Cys94 is subject to S-nitrosocysteine. Ser140 is modified (phosphoserine).

This sequence belongs to the globin family. Heterotetramer of two alpha chains and two gamma chains in fetal hemoglobin (Hb F). In terms of tissue distribution, red blood cells.

Gamma chains make up the fetal hemoglobin F, in combination with alpha chains. This is Hemoglobin subunit gamma-1 (HBG1) from Gorilla gorilla gorilla (Western lowland gorilla).